The sequence spans 217 residues: dITP/XTP pyrophosphatase (217 aa).

7 to 12 (SRNKKK) contributes to the substrate binding site. D72 acts as the Proton acceptor in catalysis. D72 provides a ligand contact to Mg(2+). Substrate contacts are provided by residues S73, 163 to 166 (FGYD), K195, and 200 to 201 (HR).

This sequence belongs to the HAM1 NTPase family. As to quaternary structure, homodimer. Requires Mg(2+) as cofactor.

It catalyses the reaction XTP + H2O = XMP + diphosphate + H(+). The enzyme catalyses dITP + H2O = dIMP + diphosphate + H(+). It carries out the reaction ITP + H2O = IMP + diphosphate + H(+). In terms of biological role, pyrophosphatase that catalyzes the hydrolysis of nucleoside triphosphates to their monophosphate derivatives, with a high preference for the non-canonical purine nucleotides XTP (xanthosine triphosphate), dITP (deoxyinosine triphosphate) and ITP. Seems to function as a house-cleaning enzyme that removes non-canonical purine nucleotides from the nucleotide pool, thus preventing their incorporation into DNA/RNA and avoiding chromosomal lesions. The sequence is that of dITP/XTP pyrophosphatase from Corynebacterium jeikeium (strain K411).